A 313-amino-acid polypeptide reads, in one-letter code: Oxaloacetate tautomerase Fahd2a, mitochondrial (313 aa).

Residues 1-84 (MLGSGRRRLL…TALSVARRAL (84 aa)) constitute a mitochondrion transit peptide. 3 residues coordinate Mg(2+): E159, E161, and D190. Residue K202 is modified to N6-acetyllysine; alternate. The residue at position 202 (K202) is an N6-succinyllysine; alternate. K233 is subject to N6-acetyllysine.

Belongs to the FAH family. The cofactor is Mg(2+). Requires Mn(2+) as cofactor.

It is found in the mitochondrion. The enzyme catalyses oxaloacetate = enol-oxaloacetate. Tautomerase that converts enol-oxaloacetate, a strong inhibitor of succinate dehydrogenase, to the physiological keto form of oxaloacetate. It is thereby required to maximize aerobic respiration efficiency by preventing succinate dehydrogenase inhibition. The chain is Oxaloacetate tautomerase Fahd2a, mitochondrial from Rattus norvegicus (Rat).